Consider the following 681-residue polypeptide: DNA ligase (681 aa).

NAD(+) contacts are provided by residues 34–38 (DEEYD), 83–84 (SL), and Glu-112. The N6-AMP-lysine intermediate role is filled by Lys-114. Positions 135, 169, 285, and 309 each coordinate NAD(+). Residues Cys-403, Cys-406, Cys-422, and Cys-427 each contribute to the Zn(2+) site. Residues 584–673 (TTSNILDGLT…GVELKESWKK (90 aa)) form the BRCT domain.

The protein belongs to the NAD-dependent DNA ligase family. LigA subfamily. Mg(2+) is required as a cofactor. Mn(2+) serves as cofactor.

It catalyses the reaction NAD(+) + (deoxyribonucleotide)n-3'-hydroxyl + 5'-phospho-(deoxyribonucleotide)m = (deoxyribonucleotide)n+m + AMP + beta-nicotinamide D-nucleotide.. In terms of biological role, DNA ligase that catalyzes the formation of phosphodiester linkages between 5'-phosphoryl and 3'-hydroxyl groups in double-stranded DNA using NAD as a coenzyme and as the energy source for the reaction. It is essential for DNA replication and repair of damaged DNA. The polypeptide is DNA ligase (Fervidobacterium nodosum (strain ATCC 35602 / DSM 5306 / Rt17-B1)).